A 184-amino-acid polypeptide reads, in one-letter code: Probable S-adenosyl-L-methionine-binding protein PYRAB06630 (184 aa).

The TsaA-like domain occupies Y9–N140. S-adenosyl-L-methionine contacts are provided by residues P26–Q28, H65–R66, R89, and L120–T123.

The protein belongs to the tRNA methyltransferase O family.

This Pyrococcus abyssi (strain GE5 / Orsay) protein is Probable S-adenosyl-L-methionine-binding protein PYRAB06630.